The primary structure comprises 403 residues: Phosphoglycerate kinase (403 aa).

Residues 21 to 23, arginine 36, 59 to 62, arginine 119, and arginine 154 contribute to the substrate site; these read DFN and HLGR. ATP is bound by residues lysine 207, glycine 299, glutamate 330, and 357–360; that span reads GGDA.

It belongs to the phosphoglycerate kinase family. Monomer.

Its subcellular location is the cytoplasm. The enzyme catalyses (2R)-3-phosphoglycerate + ATP = (2R)-3-phospho-glyceroyl phosphate + ADP. Its pathway is carbohydrate degradation; glycolysis; pyruvate from D-glyceraldehyde 3-phosphate: step 2/5. The polypeptide is Phosphoglycerate kinase (Chlamydia trachomatis serovar L2 (strain ATCC VR-902B / DSM 19102 / 434/Bu)).